Consider the following 1284-residue polypeptide: Neurexin-4 (1284 aa).

Positions 1–35 (MRPPRSNTKAAFSSLQFGLLCLLLLVNNGIKSVQA) are cleaved as a signal peptide. The Extracellular segment spans residues 36–1217 (DAFTDYFSDY…LRKAYNEVDS (1182 aa)). Positions 47 to 185 (CNQPLMERAV…ISMRVELYGC (139 aa)) constitute an F5/8 type C domain. Cys-47 and Cys-185 are disulfide-bonded. 4 N-linked (GlcNAc...) asparagine glycosylation sites follow: Asn-195, Asn-329, Asn-340, and Asn-398. Positions 220–369 (FKTAFANGVM…FTRVNTIYAC (150 aa)) constitute a Laminin G-like 1 domain. An intrachain disulfide couples Cys-333 to Cys-369. In terms of domain architecture, Laminin G-like 2 spans 403–540 (FRTYEETGVM…CGDDVVVDAC (138 aa)). Cystine bridges form between Cys-507–Cys-540, Cys-546–Cys-557, Cys-551–Cys-566, and Cys-568–Cys-578. One can recognise an EGF-like 1 domain in the interval 542–579 (MIDRCNPNPCQHKGLCHQNSREFFCDCGHTGYAGAVCH). Asn-668 is a glycosylation site (N-linked (GlcNAc...) asparagine). A Laminin G-like 3 domain is found at 824–962 (FRTTQENSVI…RGLYGISTGC (139 aa)). Cystine bridges form between Cys-934–Cys-962, Cys-966–Cys-977, Cys-971–Cys-986, and Cys-988–Cys-998. One can recognise an EGF-like 2 domain in the interval 962–999 (CVGRCESNPCLNNGTCIERYDGYSCDCRWSAFKGPICA). Residue Asn-974 is glycosylated (N-linked (GlcNAc...) asparagine). The Laminin G-like 4 domain occupies 1032–1183 (FTTTIPKGFL…LGTQLTEDFC (152 aa)). Asn-1047 and Asn-1137 each carry an N-linked (GlcNAc...) asparagine glycan. Cys-1147 and Cys-1183 are joined by a disulfide. The helical transmembrane segment at 1218 to 1238 (VLLACLLVILFLLLILMFFLI) threads the bilayer. At 1239-1284 (GRYLHRHKGDYLTHEDQGADGADDPDDAVLHSTTGHQVRKRTEIFI) the chain is on the cytoplasmic side.

It belongs to the neurexin family. As to quaternary structure, forms a complex with Nrg and Cont. Forms a complex composed of septa junction proteins Nrx-IV/Nrx, Tsf2/MTf, Cont and Nrg during late embryogenesis. The C-terminal region interacts with coracle. Interacts with Patj in cis form. Found in septate junctions of epithelial and glial cells.

The protein resides in the cell membrane. It is found in the cell junction. The protein localises to the septate junction. Functionally, seems to play a role in the formation and function of septate junctions. Septate junctions, which are the equivalent of vertebrates tight junctions, are characterized by regular arrays of transverse structures that span the intermembrane space and form a physical barrier to diffusion. Required for the blood-brain barrier formation. This is Neurexin-4 (Nrx-IV) from Drosophila melanogaster (Fruit fly).